We begin with the raw amino-acid sequence, 151 residues long: ALK and LTK ligand 2 (151 aa).

An N-terminal signal peptide occupies residues methionine 1–alanine 25. 2 disulfide bridges follow: cysteine 112–cysteine 148 and cysteine 126–cysteine 135.

This sequence belongs to the ALKAL family. In terms of assembly, homodimer.

It is found in the secreted. It localises to the cell membrane. Its function is as follows. Cytokine that acts as a physiological ligand for receptor tyrosine kinases LTK and ALK, leading to their activation. Cytokine-binding is sufficient to activate LTK. In contrast, ALKAL2-driven activation of ALK is coupled with heparin-binding to ALK. Stimulation of ALK signaling is involved in neural development and regulation of energy expenditure. The protein is ALK and LTK ligand 2 of Rattus norvegicus (Rat).